The primary structure comprises 360 residues: Photosystem II protein D1 1 (360 aa).

Helical transmembrane passes span 29–46 (YVGW…SATI), 118–133 (HFLI…EWEL), and 142–156 (WICI…AAAA). Histidine 118 lines the chlorophyll a pocket. Tyrosine 126 is a pheophytin a binding site. Residues aspartate 170 and glutamate 189 each coordinate [CaMn4O5] cluster. The chain crosses the membrane as a helical span at residues 197–218 (FHMLGVAGVFGGSLFSAMHGSL). A chlorophyll a-binding site is contributed by histidine 198. A quinone is bound by residues histidine 215 and 264–265 (SF). Histidine 215 is a Fe cation binding site. Histidine 272 provides a ligand contact to Fe cation. The helical transmembrane segment at 274–288 (FLAAWPVIGIWFTAL) threads the bilayer. [CaMn4O5] cluster-binding residues include histidine 332, glutamate 333, aspartate 342, and alanine 344. Positions 345 to 360 (GTESAPVAVGNADLNG) are excised as a propeptide.

It belongs to the reaction center PufL/M/PsbA/D family. PSII is composed of 1 copy each of membrane proteins PsbA, PsbB, PsbC, PsbD, PsbE, PsbF, PsbH, PsbI, PsbJ, PsbK, PsbL, PsbM, PsbT, PsbX, Psb30/Ycf12, peripheral proteins PsbO, CyanoQ (PsbQ), PsbU, PsbV and a large number of cofactors. It forms dimeric complexes. The cofactor is The D1/D2 heterodimer binds P680, chlorophylls that are the primary electron donor of PSII, and subsequent electron acceptors. It shares a non-heme iron and each subunit binds pheophytin, quinone, additional chlorophylls, carotenoids and lipids. D1 provides most of the ligands for the Mn4-Ca-O5 cluster of the oxygen-evolving complex (OEC). There is also a Cl(-1) ion associated with D1 and D2, which is required for oxygen evolution. The PSII complex binds additional chlorophylls, carotenoids and specific lipids.. Tyr-161 forms a radical intermediate that is referred to as redox-active TyrZ, YZ or Y-Z. Post-translationally, C-terminally processed by CtpA; processing is essential to allow assembly of the oxygen-evolving complex and thus photosynthetic growth.

It is found in the cell inner membrane. The catalysed reaction is 2 a plastoquinone + 4 hnu + 2 H2O = 2 a plastoquinol + O2. Functionally, photosystem II (PSII) is a light-driven water:plastoquinone oxidoreductase that uses light energy to abstract electrons from H(2)O, generating O(2) and a proton gradient subsequently used for ATP formation. It consists of a core antenna complex that captures photons, and an electron transfer chain that converts photonic excitation into a charge separation. The D1/D2 (PsbA/PsbD) reaction center heterodimer binds P680, the primary electron donor of PSII as well as several subsequent electron acceptors. The protein is Photosystem II protein D1 1 of Gloeobacter violaceus (strain ATCC 29082 / PCC 7421).